The chain runs to 583 residues: MRRLLLAGILRRASSSPSSHHHLHLVRALSASSPLPASDADLRKYAGYALLLLGCGAATYYSFPLPPDALHKKAVPFKYAPLPDDLHAVSNWSATHEVHTRVLLQPDSLPALHDALAAAHGECRKLRPLGSGLSPNGLALSRAGMVNLALMDKVLGVDAKKKTVTVQAGIRVAELVDALREHGLTLQNFASIREQQVGGIIQVGAHGTGARLPPIDEQVISMKLVTPAKGTIELSREKDPDLFYLARCGLGGLGVVAEVTLQCVERHQLIEHTFVSNADEVKKNHKKWLSENKHIKYLWIPYTDTVVVVQCNPPSRWRTPKFTSKYGKDEAIQHVRDLYHESLKKYRTKAESNDPEVDQLSFTELRDRLLTLDPLDKDHVIRINKAEAEYWKKSEGYRMGWSDEILGFDCGGQQWVSETCFPAGTLAKPNMKDLDYIEELLQLIEKEDIPAPAPIEQRWTACSRSPMSPASSSQEDDIFSWVGIIMYLPTSDARQRKEITEEFFNYRSKTQTNLWDGYSAYEHWAKIEVPKDKDELAELQARLRKRFPVDAYNKARMELDPNKVLSNAKLEKLFPVTEVQHEK.

The transit peptide at 1-36 (MRRLLLAGILRRASSSPSSHHHLHLVRALSASSPLP) directs the protein to the mitochondrion. A propeptide spans 37–78 (ASDADLRKYAGYALLLLGCGAATYYSFPLPPDALHKKAVPFK) (removed in mature form). Residues 45–61 (YAGYALLLLGCGAATYY) traverse the membrane as a helical segment. The region spanning 95-266 (THEVHTRVLL…AEVTLQCVER (172 aa)) is the FAD-binding PCMH-type domain.

The cofactor is FAD.

It localises to the mitochondrion membrane. The catalysed reaction is L-galactono-1,4-lactone + 4 Fe(III)-[cytochrome c] = L-dehydroascorbate + 4 Fe(II)-[cytochrome c] + 5 H(+). It participates in cofactor biosynthesis; L-ascorbate biosynthesis. In terms of biological role, involved in the biosynthesis of ascorbic acid. The protein is L-galactono-1,4-lactone dehydrogenase 1, mitochondrial (GLDH1) of Oryza sativa subsp. japonica (Rice).